Consider the following 338-residue polypeptide: Lipoate-protein ligase A (338 aa).

A BPL/LPL catalytic domain is found at 29-216 (PADQRVLFLW…AYCEHYQQQV (188 aa)). ATP is bound by residues R71, 76-79 (GAVF), and K134. K134 lines the (R)-lipoate pocket.

It belongs to the LplA family. Monomer.

Its subcellular location is the cytoplasm. The catalysed reaction is L-lysyl-[lipoyl-carrier protein] + (R)-lipoate + ATP = N(6)-[(R)-lipoyl]-L-lysyl-[lipoyl-carrier protein] + AMP + diphosphate + H(+). It functions in the pathway protein modification; protein lipoylation via exogenous pathway; protein N(6)-(lipoyl)lysine from lipoate: step 1/2. Its pathway is protein modification; protein lipoylation via exogenous pathway; protein N(6)-(lipoyl)lysine from lipoate: step 2/2. In terms of biological role, catalyzes both the ATP-dependent activation of exogenously supplied lipoate to lipoyl-AMP and the transfer of the activated lipoyl onto the lipoyl domains of lipoate-dependent enzymes. This chain is Lipoate-protein ligase A, found in Vibrio cholerae serotype O1 (strain ATCC 39541 / Classical Ogawa 395 / O395).